Consider the following 147-residue polypeptide: Large ribosomal subunit protein bL9 (147 aa).

The protein belongs to the bacterial ribosomal protein bL9 family.

Functionally, binds to the 23S rRNA. In Mycoplasmoides gallisepticum (strain R(low / passage 15 / clone 2)) (Mycoplasma gallisepticum), this protein is Large ribosomal subunit protein bL9.